A 411-amino-acid chain; its full sequence is tRNA (guanine(37)-N(1))-methyltransferase (411 aa).

S-adenosyl-L-methionine-binding positions include histidine 216, 254 to 255, 282 to 283, and asparagine 303; these read DL and DG. Residues 391 to 411 form a disordered region; that stretch reads ERQASKQDDPKRRKVAAENAA.

Belongs to the class I-like SAM-binding methyltransferase superfamily. TRM5/TYW2 family. Monomer.

It localises to the mitochondrion matrix. It is found in the nucleus. Its subcellular location is the cytoplasm. The catalysed reaction is guanosine(37) in tRNA + S-adenosyl-L-methionine = N(1)-methylguanosine(37) in tRNA + S-adenosyl-L-homocysteine + H(+). Functionally, specifically methylates the N1 position of guanosine-37 in various cytoplasmic and mitochondrial tRNAs. Methylation is not dependent on the nature of the nucleoside 5' of the target nucleoside. This is the first step in the biosynthesis of wybutosine (yW), a modified base adjacent to the anticodon of tRNAs and required for accurate decoding. The polypeptide is tRNA (guanine(37)-N(1))-methyltransferase (Phytophthora infestans (strain T30-4) (Potato late blight agent)).